The chain runs to 457 residues: Bifunctional protein GlmU (457 aa).

Residues 1 to 229 (MSNSAKSVVI…HSEMEGVNNR (229 aa)) form a pyrophosphorylase region. UDP-N-acetyl-alpha-D-glucosamine contacts are provided by residues 11 to 14 (LAAG), K25, Q76, 81 to 82 (GT), 103 to 105 (YGD), G140, E154, N169, and N227. Residue D105 participates in Mg(2+) binding. Position 227 (N227) interacts with Mg(2+). A linker region spans residues 230 to 250 (LQLAALERIYQTEQAERLLLE). The segment at 251-457 (GVMLLDPARF…GWKRPVKKKQ (207 aa)) is N-acetyltransferase. Residues R333 and K351 each contribute to the UDP-N-acetyl-alpha-D-glucosamine site. The Proton acceptor role is filled by H363. Positions 366 and 377 each coordinate UDP-N-acetyl-alpha-D-glucosamine. Residues A380, 386-387 (NY), S405, A423, and R440 each bind acetyl-CoA.

In the N-terminal section; belongs to the N-acetylglucosamine-1-phosphate uridyltransferase family. It in the C-terminal section; belongs to the transferase hexapeptide repeat family. As to quaternary structure, homotrimer. It depends on Mg(2+) as a cofactor.

It is found in the cytoplasm. It carries out the reaction alpha-D-glucosamine 1-phosphate + acetyl-CoA = N-acetyl-alpha-D-glucosamine 1-phosphate + CoA + H(+). The catalysed reaction is N-acetyl-alpha-D-glucosamine 1-phosphate + UTP + H(+) = UDP-N-acetyl-alpha-D-glucosamine + diphosphate. It functions in the pathway nucleotide-sugar biosynthesis; UDP-N-acetyl-alpha-D-glucosamine biosynthesis; N-acetyl-alpha-D-glucosamine 1-phosphate from alpha-D-glucosamine 6-phosphate (route II): step 2/2. Its pathway is nucleotide-sugar biosynthesis; UDP-N-acetyl-alpha-D-glucosamine biosynthesis; UDP-N-acetyl-alpha-D-glucosamine from N-acetyl-alpha-D-glucosamine 1-phosphate: step 1/1. It participates in bacterial outer membrane biogenesis; LPS lipid A biosynthesis. Its function is as follows. Catalyzes the last two sequential reactions in the de novo biosynthetic pathway for UDP-N-acetylglucosamine (UDP-GlcNAc). The C-terminal domain catalyzes the transfer of acetyl group from acetyl coenzyme A to glucosamine-1-phosphate (GlcN-1-P) to produce N-acetylglucosamine-1-phosphate (GlcNAc-1-P), which is converted into UDP-GlcNAc by the transfer of uridine 5-monophosphate (from uridine 5-triphosphate), a reaction catalyzed by the N-terminal domain. The protein is Bifunctional protein GlmU of Proteus mirabilis (strain HI4320).